A 284-amino-acid chain; its full sequence is Large ribosomal subunit protein uL2 (284 aa).

Residues 232 to 284 (RGTAMNPVDHPHGGGEGRHNGYIPRTPWGKVTKGLKTRDKRKSNKWIVKDRRK) are disordered. A compositionally biased stretch (basic and acidic residues) spans 240 to 250 (DHPHGGGEGRH). Over residues 264 to 284 (KGLKTRDKRKSNKWIVKDRRK) the composition is skewed to basic residues.

The protein belongs to the universal ribosomal protein uL2 family. Part of the 50S ribosomal subunit. Forms a bridge to the 30S subunit in the 70S ribosome.

Its function is as follows. One of the primary rRNA binding proteins. Required for association of the 30S and 50S subunits to form the 70S ribosome, for tRNA binding and peptide bond formation. It has been suggested to have peptidyltransferase activity; this is somewhat controversial. Makes several contacts with the 16S rRNA in the 70S ribosome. The chain is Large ribosomal subunit protein uL2 from Chlamydia abortus (strain DSM 27085 / S26/3) (Chlamydophila abortus).